The primary structure comprises 363 residues: S-methylmethionine--homocysteine S-methyltransferase BHMT2 (363 aa).

Residues 11 to 305 (RGILERLESG…YHIRAIAEEL (295 aa)) form the Hcy-binding domain. The Zn(2+) site is built by cysteine 208, cysteine 290, and cysteine 291. Serine 321 is subject to Phosphoserine.

Homotetramer. The cofactor is Zn(2+).

It catalyses the reaction S-methyl-L-methionine + L-homocysteine = 2 L-methionine + H(+). The protein operates within amino-acid biosynthesis; L-methionine biosynthesis via de novo pathway; L-methionine from L-homocysteine (BhmT route): step 1/1. Involved in the regulation of homocysteine metabolism. Converts betaine and homocysteine to dimethylglycine and methionine, respectively. This reaction is also required for the irreversible oxidation of choline. The polypeptide is S-methylmethionine--homocysteine S-methyltransferase BHMT2 (BHMT2) (Pongo abelii (Sumatran orangutan)).